The primary structure comprises 297 residues: Large ribosomal subunit protein uL15m (297 aa).

A mitochondrion-targeting transit peptide spans 1-21; it reads MSGNGVHGVHGALQLLRSLPK. Positions 23–69 are disordered; it reads SLANLRPNPGSKKPERRRGRGRYRGRKCGRGHKGERQRGNRPRLGFE. Residues 36-53 show a composition bias toward basic residues; the sequence is PERRRGRGRYRGRKCGRG.

The protein belongs to the universal ribosomal protein uL15 family. As to quaternary structure, component of the mitochondrial ribosome large subunit (39S) which comprises a 16S rRNA and about 50 distinct proteins.

It is found in the mitochondrion. The polypeptide is Large ribosomal subunit protein uL15m (MRPL15) (Gallus gallus (Chicken)).